A 148-amino-acid chain; its full sequence is MSNRRSKARTAALQGLYQWQLMGQDVDKIDIEFIVQDIRGIDHAYFQELLRGVPQRQGELDECLGPFLDRPINEVDPVECAILRIGAFELLCRPEIPYRVVLNEAIELAKRFGAEHGHRYVNGILDKVAQKVRATEFRSRALRRRLQT.

Belongs to the NusB family.

In terms of biological role, involved in transcription antitermination. Required for transcription of ribosomal RNA (rRNA) genes. Binds specifically to the boxA antiterminator sequence of the ribosomal RNA (rrn) operons. This Nitrosococcus oceani (strain ATCC 19707 / BCRC 17464 / JCM 30415 / NCIMB 11848 / C-107) protein is Transcription antitermination protein NusB.